A 259-amino-acid chain; its full sequence is uncharacterized protein (259 aa).

Residues 1 to 22 (MKHSKKLLLCISFLLITFFISG) form the signal peptide. The N-palmitoyl cysteine moiety is linked to residue Cys23. A lipid anchor (S-diacylglycerol cysteine) is attached at Cys23.

It belongs to the staphylococcal tandem lipoprotein family.

Its subcellular location is the cell membrane. This is an uncharacterized protein from Staphylococcus epidermidis (strain ATCC 35984 / DSM 28319 / BCRC 17069 / CCUG 31568 / BM 3577 / RP62A).